The sequence spans 68 residues: uncharacterized protein (68 aa).

This is an uncharacterized protein from Feline immunodeficiency virus (strain San Diego) (FIV).